Here is a 310-residue protein sequence, read N- to C-terminus: tRNA dimethylallyltransferase (310 aa).

An ATP-binding site is contributed by 11 to 18 (GPTAVGKT). 13–18 (TAVGKT) is a substrate binding site. The segment at 36 to 39 (DSMQ) is interaction with substrate tRNA.

The protein belongs to the IPP transferase family. Monomer. Mg(2+) serves as cofactor.

It carries out the reaction adenosine(37) in tRNA + dimethylallyl diphosphate = N(6)-dimethylallyladenosine(37) in tRNA + diphosphate. In terms of biological role, catalyzes the transfer of a dimethylallyl group onto the adenine at position 37 in tRNAs that read codons beginning with uridine, leading to the formation of N6-(dimethylallyl)adenosine (i(6)A). This is tRNA dimethylallyltransferase from Shouchella clausii (strain KSM-K16) (Alkalihalobacillus clausii).